The sequence spans 199 residues: Cytochrome c oxidase subunit 2 (199 aa).

Residues 1-13 (AICSLVLYLLTLM) traverse the membrane as a helical segment. The Mitochondrial matrix portion of the chain corresponds to 14–26 (LMEKLSSNTVDAQ). Residues 27–54 (EVELIWTILPAIVLILLALPSLQILYMM) form a helical membrane-spanning segment. Residues 55–199 (DEIDEPDLTL…SSLLSISSSL (145 aa)) lie on the Mitochondrial intermembrane side of the membrane. Positions 128, 163, 165, 167, 171, and 174 each coordinate Cu cation. Glutamate 165 contributes to the Mg(2+) binding site.

This sequence belongs to the cytochrome c oxidase subunit 2 family. As to quaternary structure, component of the cytochrome c oxidase (complex IV, CIV), a multisubunit enzyme composed of 14 subunits. The complex is composed of a catalytic core of 3 subunits MT-CO1, MT-CO2 and MT-CO3, encoded in the mitochondrial DNA, and 11 supernumerary subunits COX4I, COX5A, COX5B, COX6A, COX6B, COX6C, COX7A, COX7B, COX7C, COX8 and NDUFA4, which are encoded in the nuclear genome. The complex exists as a monomer or a dimer and forms supercomplexes (SCs) in the inner mitochondrial membrane with NADH-ubiquinone oxidoreductase (complex I, CI) and ubiquinol-cytochrome c oxidoreductase (cytochrome b-c1 complex, complex III, CIII), resulting in different assemblies (supercomplex SCI(1)III(2)IV(1) and megacomplex MCI(2)III(2)IV(2)). Found in a complex with TMEM177, COA6, COX18, COX20, SCO1 and SCO2. Interacts with TMEM177 in a COX20-dependent manner. Interacts with COX20. Interacts with COX16. Cu cation is required as a cofactor.

The protein resides in the mitochondrion inner membrane. It carries out the reaction 4 Fe(II)-[cytochrome c] + O2 + 8 H(+)(in) = 4 Fe(III)-[cytochrome c] + 2 H2O + 4 H(+)(out). Functionally, component of the cytochrome c oxidase, the last enzyme in the mitochondrial electron transport chain which drives oxidative phosphorylation. The respiratory chain contains 3 multisubunit complexes succinate dehydrogenase (complex II, CII), ubiquinol-cytochrome c oxidoreductase (cytochrome b-c1 complex, complex III, CIII) and cytochrome c oxidase (complex IV, CIV), that cooperate to transfer electrons derived from NADH and succinate to molecular oxygen, creating an electrochemical gradient over the inner membrane that drives transmembrane transport and the ATP synthase. Cytochrome c oxidase is the component of the respiratory chain that catalyzes the reduction of oxygen to water. Electrons originating from reduced cytochrome c in the intermembrane space (IMS) are transferred via the dinuclear copper A center (CU(A)) of subunit 2 and heme A of subunit 1 to the active site in subunit 1, a binuclear center (BNC) formed by heme A3 and copper B (CU(B)). The BNC reduces molecular oxygen to 2 water molecules using 4 electrons from cytochrome c in the IMS and 4 protons from the mitochondrial matrix. The polypeptide is Cytochrome c oxidase subunit 2 (MT-CO2) (Casuarius bennetti (Dwarf cassowary)).